The sequence spans 732 residues: Kell blood group glycoprotein (732 aa).

The interval 1 to 37 is disordered; the sequence is MEGGDQSEEEPRERSQAGGMGTLWSQESTPEERLPVE. Over 1–47 the chain is Cytoplasmic; it reads MEGGDQSEEEPRERSQAGGMGTLWSQESTPEERLPVEGSRPWAVARR. S7 is subject to Phosphoserine. A helical; Signal-anchor for type II membrane protein transmembrane segment spans residues 48-67; sequence VLTAILILGLLLCFSVLLFY. Over 68-732 the chain is Extracellular; sequence NFQNCGPRPC…LNPSSRCQLW (665 aa). Positions 76 to 732 constitute a Peptidase M13 domain; the sequence is PCETSVCLDL…LNPSSRCQLW (657 aa). C77 and C82 are oxidised to a cystine. Residues N94 and N115 are each glycosylated (N-linked (GlcNAc...) asparagine). 4 disulfide bridges follow: C100-C717, C108-C682, C155-C410, and C610-C729. The N-linked (GlcNAc...) asparagine; in KEL2 antigen glycan is linked to N191. The N-linked (GlcNAc...) asparagine glycan is linked to N345. H581 lines the Zn(2+) pocket. Residue E582 is part of the active site. H585 contributes to the Zn(2+) binding site. The N-linked (GlcNAc...) asparagine glycan is linked to N627. E634 contributes to the Zn(2+) binding site. The active-site Proton donor is the D638. A disordered region spans residues 684 to 703; the sequence is KPSPQDSHDTHSPPHLRVHG.

Belongs to the peptidase M13 family. Heterodimer with XK; disulfide-linked. The cofactor is Zn(2+). Post-translationally, N-glycosylated. Expressed at high levels in erythrocytes and testis (in Sertoli cells), and, at lower levels, in skeletal muscle, tonsils (in follicular dendritic cells), lymph node, spleen and appendix (at protein level). Also expressed in many adult and fetal nonerythroid tissues, including brain, spleen, lymph nodes and bone marrow.

Its subcellular location is the cell membrane. In terms of biological role, zinc endopeptidase with endothelin-3-converting enzyme activity. Cleaves EDN1, EDN2 and EDN3, with a marked preference for EDN3. The sequence is that of Kell blood group glycoprotein (KEL) from Homo sapiens (Human).